The sequence spans 208 residues: 7-carboxy-7-deazaguanine synthase (208 aa).

Substrate contacts are provided by residues 23–25 (LQG) and arginine 38. One can recognise a Radical SAM core domain in the interval 29-208 (WAGGNAFFIR…LQTHKYLGVR (180 aa)). Residues cysteine 42, cysteine 46, and cysteine 49 each coordinate [4Fe-4S] cluster. A substrate-binding site is contributed by threonine 83. S-adenosyl-L-methionine-binding positions include glycine 85 and 126-128 (SPK).

The protein belongs to the radical SAM superfamily. 7-carboxy-7-deazaguanine synthase family. Homodimer. [4Fe-4S] cluster serves as cofactor. The cofactor is S-adenosyl-L-methionine. Requires Mg(2+) as cofactor.

It catalyses the reaction 6-carboxy-5,6,7,8-tetrahydropterin + H(+) = 7-carboxy-7-deazaguanine + NH4(+). It participates in purine metabolism; 7-cyano-7-deazaguanine biosynthesis. Functionally, catalyzes the complex heterocyclic radical-mediated conversion of 6-carboxy-5,6,7,8-tetrahydropterin (CPH4) to 7-carboxy-7-deazaguanine (CDG), a step common to the biosynthetic pathways of all 7-deazapurine-containing compounds. This Synechocystis sp. (strain ATCC 27184 / PCC 6803 / Kazusa) protein is 7-carboxy-7-deazaguanine synthase.